A 206-amino-acid polypeptide reads, in one-letter code: GTP-binding protein YPTC5 (206 aa).

15–22 serves as a coordination point for GTP; it reads GDSGVGKT. The Effector region motif lies at 37-45; sequence YKATIGADF. GTP is bound by residues 63–67 and 125–128; these read DTAGQ and NKID. 2 S-geranylgeranyl cysteine lipidation sites follow: cysteine 205 and cysteine 206.

It belongs to the small GTPase superfamily. Rab family.

It is found in the cell membrane. Functionally, protein transport. Probably involved in vesicular traffic. This is GTP-binding protein YPTC5 (YPTC5) from Chlamydomonas reinhardtii (Chlamydomonas smithii).